The primary structure comprises 528 residues: Sensory rhodopsin I transducer (528 aa).

Helical transmembrane passes span 11–31 (GAKLGVGYIATATLLITVGVV) and 35–55 (VASTVVAGIAGLLTLGSINAA). HAMP domains follow at residues 55 to 107 (AETV…DRLS) and 142 to 195 (TAYQ…ETIE). Positions 214-455 (TSRRVQQEVD…ATADSIADVT (242 aa)) constitute a Methyl-accepting transducer domain. Glu259 carries the post-translational modification Glutamate methyl ester (Glu).

The protein belongs to the methyl-accepting chemotaxis (MCP) protein family. Interacts with Sop1.

The protein resides in the cell membrane. In terms of biological role, transduces signals from the phototaxis receptor sensory rhodopsin I (Sop1). The chain is Sensory rhodopsin I transducer (htr1) from Haloarcula marismortui (strain ATCC 43049 / DSM 3752 / JCM 8966 / VKM B-1809) (Halobacterium marismortui).